Consider the following 701-residue polypeptide: Peptide transporter CstA (701 aa).

Residues 1-6 (MNKSGK) are Cytoplasmic-facing. A helical membrane pass occupies residues 7–27 (YLVWTVLSVMGAFALGYIALN). Topologically, residues 28 to 33 (RGEQIN) are periplasmic. Residues 34-54 (ALWIVVASVCIYLIAYRFYGL) form a helical membrane-spanning segment. Residues 55–86 (YIAKNVLAVDPTRMTPAVRHNDGLDYVPTDKK) lie on the Cytoplasmic side of the membrane. Residues 87–107 (VLFGHHFAAIAGAGPLVGPVL) traverse the membrane as a helical segment. At 108–117 (AAQMGYLPGM) the chain is on the periplasmic side. Residues 118–138 (IWLLAGVVLAGAVQDFMVLFV) traverse the membrane as a helical segment. The Cytoplasmic segment spans residues 139–160 (STRRDGRSLGELVKEEMGPTAG). A helical membrane pass occupies residues 161 to 181 (VIALVACFMIMVIILAVLAMI). Residues 182-189 (VVKALTHS) lie on the Periplasmic side of the membrane. The helical transmembrane segment at 190–210 (PWGTYTVAFTIPLALFMGIYL) threads the bilayer. Topologically, residues 211–217 (RYLRPGR) are cytoplasmic. The helical transmembrane segment at 218-238 (IGEVSVIGLVFLIFAIISGGW) threads the bilayer. Over 239-255 (VAESPTWAPYFDFTGVQ) the chain is Periplasmic. A helical transmembrane segment spans residues 256 to 276 (LTWMLVGYGFVAAVLPVWLLL). Topologically, residues 277-280 (APRD) are cytoplasmic. The chain crosses the membrane as a helical span at residues 281-301 (YLSTFLKIGTIVGLAVGILIM). The Periplasmic portion of the chain corresponds to 302–324 (RPTLTMPALTKFVDGTGPVWTGN). A helical transmembrane segment spans residues 325 to 345 (LFPFLFITIACGAVSGFHALI). The Cytoplasmic portion of the chain corresponds to 346-372 (SSGTTPKMLANEGQACFIGYGGMLMES). The helical transmembrane segment at 373 to 393 (FVAIMALVSACIIDPGVYFAM) threads the bilayer. Residues 394–395 (NS) are Periplasmic-facing. A helical membrane pass occupies residues 396–416 (PMAVLAPAGTADVVASAAQVV). Residues 417 to 439 (SSWGFSITPDTLNQIASEVGEQS) lie on the Cytoplasmic side of the membrane. The helical transmembrane segment at 440–460 (IISRAGGAPTLAVGMAYILHG) threads the bilayer. Topologically, residues 461–463 (ALG) are periplasmic. A helical transmembrane segment spans residues 464–484 (GMMDVAFWYHFAILFEALFIL). Residues 485 to 523 (TAVDAGTRAARFMLQDLLGVVSPGLKRTDSLPANLLATA) are Cytoplasmic-facing. Residues 524–544 (LCVLAWGYFLHQGVVDPLGGI) traverse the membrane as a helical segment. Over 545–550 (NTLWPL) the chain is Periplasmic. Residues 551-571 (FGIANQMLAGMALMLCAVVLF) traverse the membrane as a helical segment. The Cytoplasmic segment spans residues 572 to 577 (KMKRQR). Residues 578–598 (YAWVALVPTAWLLICTLTAGW) form a helical membrane-spanning segment. Topologically, residues 599–643 (QKAFSPDAKVGFLAIANKFQAMIDSGNIPSQYTESQLAQLVFNNR) are periplasmic. The chain crosses the membrane as a helical span at residues 644–664 (LDAGLTIFFMVVVVVLALFSI). Over 665–701 (KTALAALKDPKPTAKETPYEPMPENVEEIVAQAKGAH) the chain is Cytoplasmic.

This sequence belongs to the peptide transporter carbon starvation (CstA) (TC 2.A.114) family.

It is found in the cell inner membrane. Functionally, involved in peptide utilization during carbon starvation. The polypeptide is Peptide transporter CstA (Escherichia coli (strain K12)).